Reading from the N-terminus, the 348-residue chain is Sec-independent protein translocase protein TatC (348 aa).

6 helical membrane passes run 7-27, 162-182, 192-212, 244-264, 278-298, and 299-319; these read LCLT…MDIL, VVIS…PGLL, CMAV…FIVL, MILM…FVKL, YAIV…DVAT, and MMLM…LAWM.

It belongs to the TatC family. In terms of assembly, forms a complex with TatA.

It is found in the cell membrane. In terms of biological role, part of the twin-arginine translocation (Tat) system that transports large folded proteins containing a characteristic twin-arginine motif in their signal peptide across membranes. The polypeptide is Sec-independent protein translocase protein TatC (Akkermansia muciniphila (strain ATCC BAA-835 / DSM 22959 / JCM 33894 / BCRC 81048 / CCUG 64013 / CIP 107961 / Muc)).